Consider the following 526-residue polypeptide: Probable feruloyl esterase B-2 (526 aa).

Residues 1 to 19 form the signal peptide; it reads MPSLRRLLPFLAAGSAALA. 2 disulfide bridges follow: Cys-28-Cys-75 and Cys-63-Cys-114. Asn-53, Asn-85, Asn-98, and Asn-138 each carry an N-linked (GlcNAc...) asparagine glycan. Disulfide bonds link Cys-187/Cys-441, Cys-256/Cys-273, and Cys-282/Cys-291. Residue Ser-188 is the Acyl-ester intermediate of the active site. The N-linked (GlcNAc...) asparagine glycan is linked to Asn-246. Asp-257, Asp-260, Ala-262, Asp-264, and Ile-266 together coordinate Ca(2+). Asn-287 and Asn-311 each carry an N-linked (GlcNAc...) asparagine glycan. Active-site charge relay system residues include Asp-400 and His-440. 2 N-linked (GlcNAc...) asparagine glycosylation sites follow: Asn-490 and Asn-516. Cys-503 and Cys-525 are disulfide-bonded.

It belongs to the tannase family.

It is found in the secreted. It catalyses the reaction feruloyl-polysaccharide + H2O = ferulate + polysaccharide.. In terms of biological role, involved in degradation of plant cell walls. Hydrolyzes the feruloyl-arabinose ester bond in arabinoxylans as well as the feruloyl-galactose and feruloyl-arabinose ester bonds in pectin. The protein is Probable feruloyl esterase B-2 (faeB-2) of Aspergillus oryzae (strain ATCC 42149 / RIB 40) (Yellow koji mold).